Reading from the N-terminus, the 416-residue chain is 4-hydroxy-3-methylbut-2-en-1-yl diphosphate synthase (flavodoxin) (416 aa).

The [4Fe-4S] cluster site is built by Cys-304, Cys-307, Cys-350, and Glu-357.

This sequence belongs to the IspG family. [4Fe-4S] cluster is required as a cofactor.

The catalysed reaction is (2E)-4-hydroxy-3-methylbut-2-enyl diphosphate + oxidized [flavodoxin] + H2O + 2 H(+) = 2-C-methyl-D-erythritol 2,4-cyclic diphosphate + reduced [flavodoxin]. The protein operates within isoprenoid biosynthesis; isopentenyl diphosphate biosynthesis via DXP pathway; isopentenyl diphosphate from 1-deoxy-D-xylulose 5-phosphate: step 5/6. Converts 2C-methyl-D-erythritol 2,4-cyclodiphosphate (ME-2,4cPP) into 1-hydroxy-2-methyl-2-(E)-butenyl 4-diphosphate. The chain is 4-hydroxy-3-methylbut-2-en-1-yl diphosphate synthase (flavodoxin) from Allorhizobium ampelinum (strain ATCC BAA-846 / DSM 112012 / S4) (Agrobacterium vitis (strain S4)).